Here is a 95-residue protein sequence, read N- to C-terminus: Integration host factor subunit beta (95 aa).

Residues serine 52–aspartate 95 are disordered. Positions proline 82–aspartate 95 are enriched in basic and acidic residues.

It belongs to the bacterial histone-like protein family. As to quaternary structure, heterodimer of an alpha and a beta chain.

This protein is one of the two subunits of integration host factor, a specific DNA-binding protein that functions in genetic recombination as well as in transcriptional and translational control. This Methylococcus capsulatus (strain ATCC 33009 / NCIMB 11132 / Bath) protein is Integration host factor subunit beta.